The sequence spans 191 residues: Peptidyl-tRNA hydrolase (191 aa).

Residue Y17 participates in tRNA binding. Catalysis depends on H22, which acts as the Proton acceptor. TRNA is bound by residues Y68, N70, and N116.

The protein belongs to the PTH family. In terms of assembly, monomer.

The protein localises to the cytoplasm. It carries out the reaction an N-acyl-L-alpha-aminoacyl-tRNA + H2O = an N-acyl-L-amino acid + a tRNA + H(+). Hydrolyzes ribosome-free peptidyl-tRNAs (with 1 or more amino acids incorporated), which drop off the ribosome during protein synthesis, or as a result of ribosome stalling. Its function is as follows. Catalyzes the release of premature peptidyl moieties from peptidyl-tRNA molecules trapped in stalled 50S ribosomal subunits, and thus maintains levels of free tRNAs and 50S ribosomes. The chain is Peptidyl-tRNA hydrolase from Mycobacterium ulcerans (strain Agy99).